Here is a 368-residue protein sequence, read N- to C-terminus: Phospho-N-acetylmuramoyl-pentapeptide-transferase (368 aa).

Transmembrane regions (helical) follow at residues Ala-30–Leu-50, Leu-72–Ser-92, Ile-95–Ile-115, Val-139–Leu-159, Tyr-169–Val-189, Ala-208–Val-228, Gly-238–Phe-258, Glu-264–Ile-286, and Lys-345–Leu-365.

It belongs to the glycosyltransferase 4 family. MraY subfamily. It depends on Mg(2+) as a cofactor.

The protein resides in the cell inner membrane. The catalysed reaction is UDP-N-acetyl-alpha-D-muramoyl-L-alanyl-gamma-D-glutamyl-meso-2,6-diaminopimeloyl-D-alanyl-D-alanine + di-trans,octa-cis-undecaprenyl phosphate = di-trans,octa-cis-undecaprenyl diphospho-N-acetyl-alpha-D-muramoyl-L-alanyl-D-glutamyl-meso-2,6-diaminopimeloyl-D-alanyl-D-alanine + UMP. Its pathway is cell wall biogenesis; peptidoglycan biosynthesis. Its function is as follows. Catalyzes the initial step of the lipid cycle reactions in the biosynthesis of the cell wall peptidoglycan: transfers peptidoglycan precursor phospho-MurNAc-pentapeptide from UDP-MurNAc-pentapeptide onto the lipid carrier undecaprenyl phosphate, yielding undecaprenyl-pyrophosphoryl-MurNAc-pentapeptide, known as lipid I. This is Phospho-N-acetylmuramoyl-pentapeptide-transferase from Pelodictyon phaeoclathratiforme (strain DSM 5477 / BU-1).